Here is a 142-residue protein sequence, read N- to C-terminus: Hemoglobin subunit alpha (142 aa).

The Globin domain occupies 2 to 142 (VLSPDDKKHV…VSTVLTSKYR (141 aa)). Serine 4 bears the Phosphoserine mark. Lysine 8 and lysine 12 each carry N6-succinyllysine. Lysine 17 carries the post-translational modification N6-acetyllysine; alternate. At lysine 17 the chain carries N6-succinyllysine; alternate. At tyrosine 25 the chain carries Phosphotyrosine. Serine 36 is modified (phosphoserine). Lysine 41 bears the N6-succinyllysine mark. Position 50 is a phosphoserine (serine 50). Position 59 (histidine 59) interacts with O2. A heme b-binding site is contributed by histidine 88. At serine 103 the chain carries Phosphoserine. Phosphothreonine is present on threonine 109. 2 positions are modified to phosphoserine: serine 125 and serine 132. Phosphothreonine is present on residues threonine 135 and threonine 138. Serine 139 bears the Phosphoserine mark.

Belongs to the globin family. In terms of assembly, heterotetramer of two alpha chains and two beta chains. As to expression, red blood cells.

Its function is as follows. Involved in oxygen transport from the lung to the various peripheral tissues. Hemopressin acts as an antagonist peptide of the cannabinoid receptor CNR1. Hemopressin-binding efficiently blocks cannabinoid receptor CNR1 and subsequent signaling. The chain is Hemoglobin subunit alpha (HBA) from Papio anubis (Olive baboon).